We begin with the raw amino-acid sequence, 295 residues long: Cyclin-G1 (295 aa).

The protein belongs to the cyclin family. Cyclin G subfamily.

The protein resides in the nucleus. In terms of biological role, may play a role in growth regulation. Is associated with G2/M phase arrest in response to DNA damage. May be an intermediate by which p53 mediates its role as an inhibitor of cellular proliferation. The polypeptide is Cyclin-G1 (CCNG1) (Pongo abelii (Sumatran orangutan)).